The primary structure comprises 401 residues: NADH-quinone oxidoreductase subunit D 2 (401 aa).

Belongs to the complex I 49 kDa subunit family. As to quaternary structure, NDH-1 is composed of 14 different subunits. Subunits NuoB, C, D, E, F, and G constitute the peripheral sector of the complex.

The protein localises to the cell inner membrane. It catalyses the reaction a quinone + NADH + 5 H(+)(in) = a quinol + NAD(+) + 4 H(+)(out). In terms of biological role, NDH-1 shuttles electrons from NADH, via FMN and iron-sulfur (Fe-S) centers, to quinones in the respiratory chain. The immediate electron acceptor for the enzyme in this species is believed to be ubiquinone. Couples the redox reaction to proton translocation (for every two electrons transferred, four hydrogen ions are translocated across the cytoplasmic membrane), and thus conserves the redox energy in a proton gradient. The chain is NADH-quinone oxidoreductase subunit D 2 from Koribacter versatilis (strain Ellin345).